The chain runs to 596 residues: MKHIRNFSIIAHIDHGKSTLSDRLIQECGGLSDREMAAQVLDSMDIERERGITIKAQSVTLDYKAQDGETYQLNFIDTPGHVDFSYEVSRSLAACEGALLVVDAGQGVEAQTLANCYTALEMDMDVVPVLNKIDLPQADPERVADEIEDIVGIEAADAVRCSAKTGIGIKDVLEVIVAQIPSPEGDPEGPLQALIIDSWFDSYQGVVSLVRIKNGVLRKGDKFKVMSTGQNYNADRVGIFTPKQTDTTELKTGEVGFIIAGIKEIHGAPVGDTLTHAKHGADKPLAGFKKVKPQVYAGLFPISTDDYESFRDALNKLSLNDASLFFEPETSSALGFGFRIGFLGLLHMEIIQERLEREYNLDLITTAPTVVYEIVKTSGETIYVDNPSDLPAINNIEEMREPIVETNILVPKEYLGNVITLCVEKRGVQKNLVYHGNQVALTYELPMAEVVMDFFDRLKSTSRGYASLEYNFIRFEPADMVRLDILINGDRVDALAMIIHKGLIRSKGLALVNKMKELIPRQMFDIAVQAAVGSQIIARSSIKAMRKDVTAKCYGGDVSRKKKLLNKQKEGKKRMKQVGNVEVPQEAFLAVLKLND.

The 183-residue stretch at 2–184 (KHIRNFSIIA…VIVAQIPSPE (183 aa)) folds into the tr-type G domain. GTP-binding positions include 14–19 (DHGKST) and 131–134 (NKID).

The protein belongs to the TRAFAC class translation factor GTPase superfamily. Classic translation factor GTPase family. LepA subfamily.

The protein localises to the cell inner membrane. It catalyses the reaction GTP + H2O = GDP + phosphate + H(+). In terms of biological role, required for accurate and efficient protein synthesis under certain stress conditions. May act as a fidelity factor of the translation reaction, by catalyzing a one-codon backward translocation of tRNAs on improperly translocated ribosomes. Back-translocation proceeds from a post-translocation (POST) complex to a pre-translocation (PRE) complex, thus giving elongation factor G a second chance to translocate the tRNAs correctly. Binds to ribosomes in a GTP-dependent manner. This chain is Elongation factor 4, found in Shewanella sediminis (strain HAW-EB3).